The sequence spans 358 residues: 3-isopropylmalate dehydrogenase (358 aa).

Substrate-binding residues include R92, R102, R130, and D224. The Mg(2+) site is built by D224, D248, and D252. 282–294 provides a ligand contact to NAD(+); that stretch reads GSAPDIAGQGIAN.

The protein belongs to the isocitrate and isopropylmalate dehydrogenases family. LeuB type 1 subfamily. Homodimer. The cofactor is Mg(2+). Mn(2+) is required as a cofactor.

The protein localises to the cytoplasm. It carries out the reaction (2R,3S)-3-isopropylmalate + NAD(+) = 4-methyl-2-oxopentanoate + CO2 + NADH. It participates in amino-acid biosynthesis; L-leucine biosynthesis; L-leucine from 3-methyl-2-oxobutanoate: step 3/4. In terms of biological role, catalyzes the oxidation of 3-carboxy-2-hydroxy-4-methylpentanoate (3-isopropylmalate) to 3-carboxy-4-methyl-2-oxopentanoate. The product decarboxylates to 4-methyl-2 oxopentanoate. The protein is 3-isopropylmalate dehydrogenase of Bordetella parapertussis (strain 12822 / ATCC BAA-587 / NCTC 13253).